The primary structure comprises 495 residues: Neuronal acetylcholine receptor subunit beta-4 (495 aa).

The first 20 residues, 1–20 (MRGTPLLLVSLFSLLQDGDC), serve as a signal peptide directing secretion. The Extracellular portion of the chain corresponds to 21–235 (RLANAEEKLM…IIKRKPLFYT (215 aa)). Residues Asn35, Asn92, Asn137, and Asn165 are each glycosylated (N-linked (GlcNAc...) asparagine). The cysteines at positions 152 and 166 are disulfide-linked. Residues 236–256 (INLIIPCVLITSLAILVFYLP) form a helical membrane-spanning segment. At 257–264 (SDCGEKMT) the chain is on the cytoplasmic side. Glu261 contributes to the Na(+) binding site. A helical transmembrane segment spans residues 265–285 (LCISVLLALTFFLLLISKIVP). Over 286–297 (PTSLDIPLIGKY) the chain is Extracellular. The chain crosses the membrane as a helical span at residues 298 to 318 (LLFTMVLVTFSIVTTVCVLNV). Topologically, residues 319–463 (HHRSPSTHTM…WKFVAMVVDR (145 aa)) are cytoplasmic. Residues 464–484 (LFLWVFVFVCILGTMGLFLPP) form a helical membrane-spanning segment. Residues 485–495 (LFQIHAPSKDS) lie on the Extracellular side of the membrane.

Belongs to the ligand-gated ion channel (TC 1.A.9) family. Acetylcholine receptor (TC 1.A.9.1) subfamily. Beta-4/CHRNB4 sub-subfamily. Neuronal AChR is composed of two different types of subunits: alpha and beta. CHRNB4/Beta-4 subunit can be combined to CHRNA2/alpha-2, CHRNA3/alpha-3 or CHRNA4/alpha-4, CHRNA5/alpha-5 and CHRNB3/beta-3 to give rise to functional receptors. Forms stoichiometries such as (CHRNA3)2:(CHRNB4)3 or (CHRNA3:CHRNB4)2:CHRNB3. Interacts with RIC3; which is required for proper folding and assembly. Interacts with LYPD6. In the brain, it is detected in the medial habenula. In the peripheral nervous system, it is found at least in the adrenal gland.

The protein resides in the synaptic cell membrane. The protein localises to the cell membrane. The enzyme catalyses Ca(2+)(in) = Ca(2+)(out). It carries out the reaction K(+)(in) = K(+)(out). It catalyses the reaction Na(+)(in) = Na(+)(out). Its activity is regulated as follows. Activated by a myriad of ligands such as acetylcholine, cytisine, nicotine, choline and epibatidine. nAChR activity is inhibited by the antagonist alpha-conotoxins BuIA and MII, small disulfide-constrained peptides from cone snails. The heteropentamer CHRNA3:CHRNB4 activity is blocked by the alpha-conotoxin ImI and AuIB. Functionally, component of neuronal acetylcholine receptors (nAChRs) that function as pentameric, ligand-gated cation channels with high calcium permeability among other activities. nAChRs are excitatory neurotrasnmitter receptors formed by a collection of nAChR subunits known to mediate synaptic transmission in the nervous system and the neuromuscular junction. Each nAchR subunit confers differential attributes to channel properties, including activation, deactivation and desensitization kinetics, pH sensitivity, cation permeability, and binding to allosteric modulators. CHRNB4 forms heteropentameric neuronal acetylcholine receptors with CHRNA2, CHRNA3 and CHRNA4, as well as CHRNA5 and CHRNB3 as accesory subunits. CHRNA3:CHRNB4 being predominant in neurons of the autonomic ganglia, it is known as ganglionic nicotinic receptor. CHRNA3:CHRNB4 or CHRNA3:CHRNA5:CHRNB4 play also an important role in the habenulo-interpeduncular tract, modulating the mesolimbic dopamine system and affecting reward circuits and addiction. Hypothalamic CHRNA3:CHRNB4 nAChR activation by nicotine leads to activation of POMC neurons and a decrease in food intake. The sequence is that of Neuronal acetylcholine receptor subunit beta-4 (Chrnb4) from Rattus norvegicus (Rat).